A 435-amino-acid polypeptide reads, in one-letter code: Protein deadpan (435 aa).

Residues 18-27 (GYSDSYGSNG) show a composition bias toward low complexity. A disordered region spans residues 18–48 (GYSDSYGSNGRMSNPNGLSKAELRKTNKPIM). Positions 40-97 (LRKTNKPIMEKRRRARINHCLNELKSLILEAMKKDPARHTKLEKADILEMTVKHLQSV) constitute a bHLH domain. One can recognise an Orange domain in the interval 116 to 149 (FKTGFVECAEEVNRYVSQMDGIDTGVRQRLSAHL). Disordered regions lie at residues 305 to 334 (QLPV…AASP) and 349 to 416 (STPP…DEPS). Residues 311–324 (STSPPLSPISSISS) show a composition bias toward low complexity. Polar residues-rich tracts occupy residues 355–378 (SAET…SSGC) and 385–395 (LQQQQVSSTSG). Phosphoserine occurs at positions 407, 408, and 411. The WRPW motif motif lies at 432-435 (WRPW).

As to quaternary structure, homodimer. Heterodimer with E(spl)mgamma-HLH and E(spl). Transcription repression requires formation of a complex with the corepressor protein Groucho. Interacts (via bHLH motif) with sisA. Interacts with da.

The protein resides in the nucleus. In terms of biological role, transcriptional repressor of genes that require a bHLH protein for their transcription. In the larval brain, required to maintain the self-renewal and identity of type II neuroblasts by regulating the expression of the transcriptional repressor erm together with other self-renewal transcriptional repressors such as klu and E(spl)mgamma-HLH. As part of its role in neuroblasts development, has been shown to be a direct target of the Notch signaling pathway, however might work also independently of N/Notch. In the developing larval and pupal brain, required for mushroom body differentiation. Involved in sex determination and SXL transcription repression when in complex with the corepressor protein Groucho. The chain is Protein deadpan (dpn) from Drosophila melanogaster (Fruit fly).